Reading from the N-terminus, the 245-residue chain is Ribonuclease 3 (245 aa).

The RNase III domain maps to 19-148 (FKVFQEKIGI…FIGALYLDQG (130 aa)). Glu61 contacts Mg(2+). The active site involves Asp65. Mg(2+) is bound by residues Asp134 and Glu137. The active site involves Glu137. Residues 174–243 (DYKSQLQELI…AAEALKKLKE (70 aa)) form the DRBM domain.

This sequence belongs to the ribonuclease III family. As to quaternary structure, homodimer. Requires Mg(2+) as cofactor.

The protein localises to the cytoplasm. It catalyses the reaction Endonucleolytic cleavage to 5'-phosphomonoester.. Digests double-stranded RNA. Involved in the processing of primary rRNA transcript to yield the immediate precursors to the large and small rRNAs (23S and 16S). Processes some mRNAs, and tRNAs when they are encoded in the rRNA operon. Processes pre-crRNA and tracrRNA of type II CRISPR loci if present in the organism. In Bacillus cereus (strain AH187), this protein is Ribonuclease 3.